We begin with the raw amino-acid sequence, 404 residues long: NADH-quinone oxidoreductase subunit D 1 (404 aa).

The protein belongs to the complex I 49 kDa subunit family. In terms of assembly, NDH-1 is composed of 14 different subunits. Subunits NuoB, C, D, E, F, and G constitute the peripheral sector of the complex.

Its subcellular location is the cell membrane. It carries out the reaction a quinone + NADH + 5 H(+)(in) = a quinol + NAD(+) + 4 H(+)(out). In terms of biological role, NDH-1 shuttles electrons from NADH, via FMN and iron-sulfur (Fe-S) centers, to quinones in the respiratory chain. The immediate electron acceptor for the enzyme in this species is believed to be a menaquinone. Couples the redox reaction to proton translocation (for every two electrons transferred, four hydrogen ions are translocated across the cytoplasmic membrane), and thus conserves the redox energy in a proton gradient. The polypeptide is NADH-quinone oxidoreductase subunit D 1 (Symbiobacterium thermophilum (strain DSM 24528 / JCM 14929 / IAM 14863 / T)).